Here is a 198-residue protein sequence, read N- to C-terminus: Probable GTP-binding protein EngB (198 aa).

One can recognise an EngB-type G domain in the interval 22-195 (NRVEVAFVGR…IDNLFLEFAT (174 aa)). GTP contacts are provided by residues 30–37 (GRSNVGKS), 57–61 (GKTRL), 75–78 (DLPG), 142–145 (TKSD), and 174–176 (FSS). The Mg(2+) site is built by Ser37 and Thr59.

Belongs to the TRAFAC class TrmE-Era-EngA-EngB-Septin-like GTPase superfamily. EngB GTPase family. Mg(2+) serves as cofactor.

Necessary for normal cell division and for the maintenance of normal septation. The polypeptide is Probable GTP-binding protein EngB (Clostridium beijerinckii (strain ATCC 51743 / NCIMB 8052) (Clostridium acetobutylicum)).